Consider the following 200-residue polypeptide: Diadenylate cyclase (200 aa).

The chain crosses the membrane as a helical span at residues 5–25; the sequence is ILLFITLIFLLLLFVFLIAFA. The DAC domain occupies 28-185; it reads NKRVRNYVVR…KGVIKTLSSN (158 aa).

It belongs to the adenylate cyclase family. DacB/CdaS subfamily. As to quaternary structure, probably oligomerizes.

Its subcellular location is the cell membrane. It catalyses the reaction 2 ATP = 3',3'-c-di-AMP + 2 diphosphate. Catalyzes the condensation of 2 ATP molecules into cyclic di-AMP (c-di-AMP), a second messenger used to regulate differing processes in different bacteria. The chain is Diadenylate cyclase from Mycoplasma genitalium (strain ATCC 33530 / DSM 19775 / NCTC 10195 / G37) (Mycoplasmoides genitalium).